A 368-amino-acid chain; its full sequence is N-acetylneuraminate epimerase (368 aa).

The first 19 residues, 1–19, serve as a signal peptide directing secretion; sequence MNKTITALAIMMASFAANA. 7 Kelch repeats span residues 40 to 84, 86 to 137, 139 to 173, 174 to 219, 222 to 265, 287 to 336, and 338 to 367; these read TVYI…AFID, NLYV…FVHN, KAYV…KINA, HYFD…VNKG, TWLI…VAGG, ENYQ…PWNN, and LLII…VTVQ. The Proton acceptor role is filled by E228.

In terms of assembly, homodimer.

Its subcellular location is the periplasm. It carries out the reaction N-acetyl-alpha-neuraminate = N-acetyl-beta-neuraminate. Its function is as follows. Converts alpha-N-acetylneuranimic acid (Neu5Ac) to the beta-anomer, accelerating the equilibrium between the alpha- and beta-anomers. Probably facilitates sialidase-negative bacteria to compete successfully for limited amounts of extracellular Neu5Ac, which is likely taken up in the beta-anomer. In addition, the rapid removal of sialic acid from solution might be advantageous to the bacterium to damp down host responses. Forms linear aceneuramate during interconversion of Neu5Ac anomers. The sequence is that of N-acetylneuraminate epimerase (nanM) from Escherichia coli (strain K12).